A 93-amino-acid polypeptide reads, in one-letter code: Small ribosomal subunit protein uS19 (93 aa).

It belongs to the universal ribosomal protein uS19 family.

In terms of biological role, protein S19 forms a complex with S13 that binds strongly to the 16S ribosomal RNA. The chain is Small ribosomal subunit protein uS19 from Nitratidesulfovibrio vulgaris (strain ATCC 29579 / DSM 644 / CCUG 34227 / NCIMB 8303 / VKM B-1760 / Hildenborough) (Desulfovibrio vulgaris).